The primary structure comprises 412 residues: D-xylonate dehydratase (412 aa).

As to quaternary structure, homooctamer.

It carries out the reaction D-xylonate = 2-dehydro-3-deoxy-D-arabinonate + H2O. NADP-dependent D-xylose dehydrogenase involved in the degradation of D-xylose, a major component of hemicelluloses such as xylan. Catalyzes the third reaction in the xylose utilization pathway through dehydratation of D-xylonate into 2-dehydro-3-deoxy-D-xylonate. The polypeptide is D-xylonate dehydratase (Haloferax volcanii (strain ATCC 29605 / DSM 3757 / JCM 8879 / NBRC 14742 / NCIMB 2012 / VKM B-1768 / DS2) (Halobacterium volcanii)).